The primary structure comprises 354 residues: MKIAILLSGGVDSSVALYTMIQKGYKNIKCYYLKIWLEDELSYIGECPWKEDITYVDSVCKKFNVPYEIINLQEEYYNRVVTYAIEELKMGNTPSPDIFCNQRIKFGAFFEKINEKYDLIVTGHYAKIENKNNSYTLKQAKDKIKDQSYFLSHLSKKQISKLHFPLGDLLKSEIRQIAHEIDLPNKNRKDSQGICFLGKIKYNEFIKYHLGELKGNIIEQETGKILGTHNGYWFFTIGQRKGIKLSHGPWFVTEKDIQNNIIYISNSTNYLKQGKEQFLVHKTNWINKPLKNDNLSAKIRHGEKKIKCKIETLKDEIIRVNLEEKDYGISPGQFCIFYKEDECLGGAKILKTLI.

ATP is bound by residues 6 to 13 (LLSGGVDS) and Leu33. Cys100 serves as the catalytic Nucleophile. An intrachain disulfide couples Cys100 to Cys195. Gly123 serves as a coordination point for ATP. Residues 145-147 (KDQ) form an interaction with tRNA region. The Cysteine persulfide intermediate role is filled by Cys195.

This sequence belongs to the MnmA/TRMU family.

It is found in the cytoplasm. The enzyme catalyses S-sulfanyl-L-cysteinyl-[protein] + uridine(34) in tRNA + AH2 + ATP = 2-thiouridine(34) in tRNA + L-cysteinyl-[protein] + A + AMP + diphosphate + H(+). In terms of biological role, catalyzes the 2-thiolation of uridine at the wobble position (U34) of tRNA, leading to the formation of s(2)U34. In Borrelia duttonii (strain Ly), this protein is tRNA-specific 2-thiouridylase MnmA.